The primary structure comprises 140 residues: Large ribosomal subunit protein uL14 (140 aa).

It belongs to the universal ribosomal protein uL14 family. Component of the large ribosomal subunit.

It is found in the cytoplasm. Component of the large ribosomal subunit. The ribosome is a large ribonucleoprotein complex responsible for the synthesis of proteins in the cell. The chain is Large ribosomal subunit protein uL14 (rpl23) from Ictalurus punctatus (Channel catfish).